The following is a 178-amino-acid chain: CDP-archaeol synthase (178 aa).

The next 5 helical transmembrane spans lie at 3–23 (LLLL…ANAV), 56–76 (FFGI…VILY), 87–107 (LFGY…GDML), 123–145 (APIL…FYPL), and 150–169 (IVLL…IIAY).

This sequence belongs to the CDP-archaeol synthase family. The cofactor is Mg(2+).

Its subcellular location is the cell membrane. The enzyme catalyses 2,3-bis-O-(geranylgeranyl)-sn-glycerol 1-phosphate + CTP + H(+) = CDP-2,3-bis-O-(geranylgeranyl)-sn-glycerol + diphosphate. It participates in membrane lipid metabolism; glycerophospholipid metabolism. Functionally, catalyzes the formation of CDP-2,3-bis-(O-geranylgeranyl)-sn-glycerol (CDP-archaeol) from 2,3-bis-(O-geranylgeranyl)-sn-glycerol 1-phosphate (DGGGP) and CTP. This reaction is the third ether-bond-formation step in the biosynthesis of archaeal membrane lipids. This is CDP-archaeol synthase from Methanococcus maripaludis (strain C6 / ATCC BAA-1332).